Here is a 186-residue protein sequence, read N- to C-terminus: Coiled-coil domain-containing protein ORF13 (186 aa).

Coiled-coil stretches lie at residues 2-30 (GIKE…DFIK) and 63-85 (LREK…QRDK).

In Helicobacter pylori (strain 35A), this protein is Coiled-coil domain-containing protein ORF13.